Consider the following 631-residue polypeptide: MDYDYEKLGLKVGLEIHQQLNTKRKLFCNCPTKIRDDEPHGEIERVLRPSQSEMGHVDKAALLESKKEKKFIYQYYNDTTCLVELDDEPPHDVAPEAVDTALEVSTLMNMKMADEVQIMRKMVIDGSNTSGFQRTMFVSQEGFIETEYGNIGVTSLCLEEDACKKIEDGKDYTKYCVDRLGIPLLEITTEPDITSPKMGKEAARRIGTILRATGKVKRGLGTIRQDVNISIKNGARIEVKGVQNLDLIEKIIENEVTRQISLNEIKEELLKRNAEVVDEIKDITELLKDTESKVLKNALKNKGVIRAILLKGFSGMIGREVQPGRRLGTEFSDRGKVLGGVGGLFHTDELPKYGITEEEVIKLKEYMNCGENDAVILVADKKNKVERALNAVIERAKESMIGIPEETRKALDDGNTSYLRPLPGAARMYPETDVPTITITEEKLEFVRNNLPEMPEEKLVRFVKEYELNEDLAKQMVMSYHVDLFETLSKKYSKIKPTLIATTLEATIKEIKREGLDTDLLTEEHLEELFNGLSEDKMSKEAVPDVIKGFIENPTKKLDEILEIKGMSSMSVEEVESIIEDIINQNISQVNEKGMGAMGLLMGRCMAQLRGKADGKLINTTLQKKLKEKVQ.

The protein belongs to the GatB/GatE family. GatE subfamily. Heterodimer of GatD and GatE.

It catalyses the reaction L-glutamyl-tRNA(Gln) + L-glutamine + ATP + H2O = L-glutaminyl-tRNA(Gln) + L-glutamate + ADP + phosphate + H(+). Its function is as follows. Allows the formation of correctly charged Gln-tRNA(Gln) through the transamidation of misacylated Glu-tRNA(Gln) in organisms which lack glutaminyl-tRNA synthetase. The reaction takes place in the presence of glutamine and ATP through an activated gamma-phospho-Glu-tRNA(Gln). The GatDE system is specific for glutamate and does not act on aspartate. This is Glutamyl-tRNA(Gln) amidotransferase subunit E from Methanococcus maripaludis (strain DSM 14266 / JCM 13030 / NBRC 101832 / S2 / LL).